The chain runs to 206 residues: Platelet glycoprotein Ib beta chain (206 aa).

A signal peptide spans 1–25 (MGSGPRGALSLLLLLLAPPSRPAAG). 2 disulfides stabilise this stretch: cysteine 26/cysteine 32 and cysteine 30/cysteine 39. The 29-residue stretch at 27–55 (PAPCSCAGTLVDCGRRGLTWASLPTAFPV) folds into the LRRNT domain. Residues 27-147 (PAPCSCAGTL…RAACAPGPLC (121 aa)) are Extracellular-facing. An LRR repeat occupies 60–83 (LVLTGNNLTALPPGLLDALPALRT). The N-linked (GlcNAc...) asparagine glycan is linked to asparagine 66. An LRRCT domain is found at 89–143 (NPWRCDCRLVPLRAWLAGRPERAPYRDLRCVAPPALRGRLLPYLAEDELRAACAP). 2 disulfide bridges follow: cysteine 93–cysteine 118 and cysteine 95–cysteine 141. A helical transmembrane segment spans residues 148–172 (WGALAAQLALLGLGLLHALLLVLLL). Residues 173–206 (CRLRRLRARARARAAARLSLTDPLVAERAGTDES) lie on the Cytoplasmic side of the membrane. Position 191 is a phosphoserine; by PKA (serine 191). Position 193 is a phosphothreonine (threonine 193).

In terms of assembly, two GP-Ib beta are disulfide-linked to one GP-Ib alpha. GP-IX is complexed with the GP-Ib heterodimer via a non covalent linkage. Interacts with TRAF4. As to expression, expressed in heart and brain.

It localises to the membrane. Its function is as follows. Gp-Ib, a surface membrane protein of platelets, participates in the formation of platelet plugs by binding to von Willebrand factor, which is already bound to the subendothelium. The chain is Platelet glycoprotein Ib beta chain (GP1BB) from Homo sapiens (Human).